The primary structure comprises 135 residues: Small ribosomal subunit protein uS11 (135 aa).

The interval 1-20 (MGRQRQQRSRGSRSRRRVRK) is disordered.

The protein belongs to the universal ribosomal protein uS11 family. Part of the 30S ribosomal subunit. Interacts with proteins S7 and S18. Binds to IF-3.

In terms of biological role, located on the platform of the 30S subunit, it bridges several disparate RNA helices of the 16S rRNA. Forms part of the Shine-Dalgarno cleft in the 70S ribosome. This chain is Small ribosomal subunit protein uS11, found in Rubrobacter xylanophilus (strain DSM 9941 / JCM 11954 / NBRC 16129 / PRD-1).